The following is a 287-amino-acid chain: Spore wall protein 7 (287 aa).

The N-terminal stretch at 1–19 (MIKGLIYLFLFRCLEGRLA) is a signal peptide.

Belongs to the SWP7 family. Interacts with SWP9.

It localises to the cytoplasm. The protein resides in the spore wall. It is found in the spore polar tube. In terms of biological role, involved in adherence of spores to the host cell surface and in infection efficiency. The protein is Spore wall protein 7 (SWP7) of Nosema bombycis (strain CQ1 / CVCC 102059) (Microsporidian parasite).